We begin with the raw amino-acid sequence, 101 residues long: UPF0358 protein EF_2458 (101 aa).

The protein belongs to the UPF0358 family.

The polypeptide is UPF0358 protein EF_2458 (Enterococcus faecalis (strain ATCC 700802 / V583)).